Reading from the N-terminus, the 754-residue chain is ATP-dependent RNA helicase DRS1 (754 aa).

Disordered regions lie at residues methionine 1–glutamate 61 and glycine 119–alanine 227. Acidic residues predominate over residues aspartate 19–lysine 34. Over residues threonine 40–lysine 51 the composition is skewed to basic residues. Basic and acidic residues predominate over residues alanine 124 to glutamate 142. Acidic residues-rich tracts occupy residues asparagine 167–methionine 193 and aspartate 202–glutamate 211. Phosphoserine is present on serine 210. The Q motif motif lies at glutamate 233 to serine 261. The Helicase ATP-binding domain maps to isoleucine 264–isoleucine 439. Position 277 to 284 (alanine 277 to threonine 284) interacts with ATP. A DEAD box motif is present at residues aspartate 387–aspartate 390. The Helicase C-terminal domain maps to lysine 450–leucine 641. Residues isoleucine 623–glutamate 669 adopt a coiled-coil conformation. The interval arginine 675–arginine 754 is disordered. Basic residues predominate over residues arginine 696–lysine 707. Basic and acidic residues predominate over residues threonine 724–phenylalanine 736. Residues lysine 737–arginine 754 are compositionally biased toward basic residues.

Belongs to the DEAD box helicase family. DDX27/DRS1 subfamily. Interacts with RRP1 and associates with pre-ribosomal particles.

It is found in the nucleus. Its subcellular location is the nucleolus. The enzyme catalyses ATP + H2O = ADP + phosphate + H(+). In terms of biological role, ATP-binding RNA helicase involved in ribosome assembly. This is ATP-dependent RNA helicase DRS1 (DRS1) from Saccharomyces cerevisiae (strain YJM789) (Baker's yeast).